We begin with the raw amino-acid sequence, 320 residues long: rRNA methyltransferase 2, mitochondrial (320 aa).

Residues 1-18 (MILVYNRIRSIISSSLGR) constitute a mitochondrion transit peptide. S-adenosyl-L-methionine is bound by residues 83–86 (PGAW), Asp104, 178–179 (DI), and Asp203. Catalysis depends on Lys264, which acts as the Proton acceptor.

This sequence belongs to the class I-like SAM-binding methyltransferase superfamily. RNA methyltransferase RlmE family.

Its subcellular location is the mitochondrion. It catalyses the reaction uridine(2791) in 21S rRNA + S-adenosyl-L-methionine = 2'-O-methyluridine(2791) in 21S rRNA + S-adenosyl-L-homocysteine + H(+). Its function is as follows. S-adenosyl-L-methionine-dependent 2'-O-ribose methyltransferase that catalyzes the formation of 2'-O-methyluridine at position 2791 (Um2791) in the 21S mitochondrial large subunit ribosomal RNA (mtLSU rRNA), a universally conserved modification in the peptidyl transferase domain of the mtLSU rRNA. The protein is rRNA methyltransferase 2, mitochondrial of Saccharomyces cerevisiae (strain ATCC 204508 / S288c) (Baker's yeast).